Consider the following 619-residue polypeptide: ETS-related transcription factor Elf-1 (619 aa).

Ser110, Ser163, Ser167, and Ser168 each carry phosphoserine. The interval 158–199 is disordered; that stretch reads EKYADSPGASSPEQPKRKKGRKTKPPRPDSPATTPNISVKKK. Basic residues predominate over residues 173-182; sequence KRKKGRKTKP. Position 187 is a phosphoserine (Ser187). Thr190 bears the Phosphothreonine mark. Positions 208-290 form a DNA-binding region, ETS; the sequence is IYLWEFLLAL…EGQRLVYQFK (83 aa). The tract at residues 300–366 is disordered; it reads NDEDPSSSIE…DPVEVAQPSE (67 aa). Positions 305-321 are enriched in low complexity; the sequence is SSSIESSDPSLSSSATS. A compositionally biased stretch (polar residues) spans 322 to 335; the sequence is NRNQTSRSRVSSSP. Phosphoserine is present on Ser432. Positions 564–592 are disordered; that stretch reads TLTQEVEKKESEDHLKENTEKTEQQPQPY. The span at 568-586 shows a compositional bias: basic and acidic residues; it reads EVEKKESEDHLKENTEKTE.

It belongs to the ETS family. In terms of assembly, binds to the underphosphorylated form of RB. May interact with other transcription factors in order to regulate specific genes. Interacts with RUNX1. In terms of tissue distribution, in fetal tissues, it is highly expressed in heart, lung liver and kidney, and weakly expressed in brain. In adult, it is highly expressed in pancreas, spleen, thymus and peripheral blood leukocytes, expressed at moderate levels in heart, placenta, lung, liver, skeletal muscle, kidney, prostate, ovary, small intestine and colon, and weakly expressed in brain and testis.

The protein resides in the nucleus. Functionally, transcription factor that activates the LYN and BLK promoters. Appears to be required for the T-cell-receptor-mediated trans activation of HIV-2 gene expression. Binds specifically to two purine-rich motifs in the HIV-2 enhancer. This chain is ETS-related transcription factor Elf-1 (ELF1), found in Homo sapiens (Human).